A 139-amino-acid chain; its full sequence is Galactoside-binding soluble lectin 13 (139 aa).

A Galectin domain is found at 6–138 (VPYKLPVSLS…DISLTSVCVC (133 aa)).

Homodimer; disulfide-linked. Detected in adult and fetal spleen, fetal kidney, adult urinary bladder and placenta. Placental expression originates predominantly from the syncytiotrophoblast.

The protein resides in the cytoplasm. It is found in the nucleus matrix. Binds beta-galactoside and lactose. Strong inducer of T-cell apoptosis. Has hemagglutinating activity towards chicken erythrocytes. This Homo sapiens (Human) protein is Galactoside-binding soluble lectin 13 (LGALS13).